A 130-amino-acid chain; its full sequence is RutC family protein HI_0719 (130 aa).

Residue C109 is part of the active site.

This sequence belongs to the RutC family. As to quaternary structure, homotrimer.

The sequence is that of RutC family protein HI_0719 from Haemophilus influenzae (strain ATCC 51907 / DSM 11121 / KW20 / Rd).